We begin with the raw amino-acid sequence, 142 residues long: Translation initiation factor 2 subunit beta (142 aa).

This sequence belongs to the eIF-2-beta/eIF-5 family. As to quaternary structure, heterotrimer composed of an alpha, a beta and a gamma chain.

In terms of biological role, eIF-2 functions in the early steps of protein synthesis by forming a ternary complex with GTP and initiator tRNA. This Thermococcus kodakarensis (strain ATCC BAA-918 / JCM 12380 / KOD1) (Pyrococcus kodakaraensis (strain KOD1)) protein is Translation initiation factor 2 subunit beta.